A 647-amino-acid polypeptide reads, in one-letter code: Acetyl-coenzyme A synthetase (647 aa).

CoA-binding positions include 192–195 (RGGR), Thr310, and Asn334. Residues 386-388 (GEP), 410-415 (DTWWQT), Asp499, and Arg514 contribute to the ATP site. CoA is bound at residue Ser522. Arg525 serves as a coordination point for ATP. Mg(2+) is bound by residues Val536, His538, and Val541. Arg583 provides a ligand contact to CoA. Lys608 is modified (N6-acetyllysine).

It belongs to the ATP-dependent AMP-binding enzyme family. Requires Mg(2+) as cofactor. Post-translationally, acetylated. Deacetylation by the SIR2-homolog deacetylase activates the enzyme.

The enzyme catalyses acetate + ATP + CoA = acetyl-CoA + AMP + diphosphate. Its function is as follows. Catalyzes the conversion of acetate into acetyl-CoA (AcCoA), an essential intermediate at the junction of anabolic and catabolic pathways. AcsA undergoes a two-step reaction. In the first half reaction, AcsA combines acetate with ATP to form acetyl-adenylate (AcAMP) intermediate. In the second half reaction, it can then transfer the acetyl group from AcAMP to the sulfhydryl group of CoA, forming the product AcCoA. The chain is Acetyl-coenzyme A synthetase from Caulobacter vibrioides (strain ATCC 19089 / CIP 103742 / CB 15) (Caulobacter crescentus).